The chain runs to 1366 residues: DNA-directed RNA polymerase subunit beta (1366 aa).

Belongs to the RNA polymerase beta chain family. The RNAP catalytic core consists of 2 alpha, 1 beta, 1 beta' and 1 omega subunit. When a sigma factor is associated with the core the holoenzyme is formed, which can initiate transcription.

The catalysed reaction is RNA(n) + a ribonucleoside 5'-triphosphate = RNA(n+1) + diphosphate. In terms of biological role, DNA-dependent RNA polymerase catalyzes the transcription of DNA into RNA using the four ribonucleoside triphosphates as substrates. The sequence is that of DNA-directed RNA polymerase subunit beta from Polynucleobacter necessarius subsp. necessarius (strain STIR1).